A 335-amino-acid polypeptide reads, in one-letter code: Ketol-acid reductoisomerase (NAD(P)(+)) (335 aa).

The 181-residue stretch at 2–182 (AKIYKDEDIS…GCARAGVIES (181 aa)) folds into the KARI N-terminal Rossmann domain. Residues 25 to 28 (YGSQ), Arg49, Ser53, and 83 to 86 (DMVQ) each bind NADP(+). His108 is an active-site residue. Gly134 lines the NADP(+) pocket. Residues 183-328 (TFKEETETDL…RKLREMMFRG (146 aa)) enclose the KARI C-terminal knotted domain. 4 residues coordinate Mg(2+): Asp191, Glu195, Glu227, and Glu231. Ser252 lines the substrate pocket.

Belongs to the ketol-acid reductoisomerase family. In terms of assembly, homodimer. Mg(2+) is required as a cofactor.

It carries out the reaction (2R)-2,3-dihydroxy-3-methylbutanoate + NAD(+) = (2S)-2-acetolactate + NADH + H(+). The enzyme catalyses (2R)-2,3-dihydroxy-3-methylbutanoate + NADP(+) = (2S)-2-acetolactate + NADPH + H(+). It functions in the pathway amino-acid biosynthesis; L-isoleucine biosynthesis; L-isoleucine from 2-oxobutanoate: step 2/4. The protein operates within amino-acid biosynthesis; L-valine biosynthesis; L-valine from pyruvate: step 2/4. Involved in the biosynthesis of branched-chain amino acids (BCAA). Catalyzes an alkyl-migration followed by a ketol-acid reduction of (S)-2-acetolactate (S2AL) to yield (R)-2,3-dihydroxy-isovalerate. In the isomerase reaction, S2AL is rearranged via a Mg-dependent methyl migration to produce 3-hydroxy-3-methyl-2-ketobutyrate (HMKB). In the reductase reaction, this 2-ketoacid undergoes a metal-dependent reduction by NADPH or NADH to yield (R)-2,3-dihydroxy-isovalerate. The protein is Ketol-acid reductoisomerase (NAD(P)(+)) of Ignisphaera aggregans (strain DSM 17230 / JCM 13409 / AQ1.S1).